The sequence spans 379 residues: Guanine nucleotide-binding protein subunit alpha-12 (379 aa).

A lipid anchor (S-palmitoyl cysteine) is attached at C11. Residues 54-379 (RLVKILLLGA…QENLKDIMLQ (326 aa)) enclose the G-alpha domain. Positions 57–70 (KILLLGAGESGKST) are G1 motif. Residues 65 to 70 (ESGKST) and 200 to 203 (LLAR) contribute to the GTP site. Mg(2+) is bound at residue S69. The segment at 198–206 (DILLARKAT) is G2 motif. T206 serves as a coordination point for Mg(2+). At T206 the chain carries Phosphothreonine. The G3 motif stretch occupies residues 221–230 (FKMVDVGGQR). The G4 motif stretch occupies residues 290 to 297 (ILFLNKMD). Residues 294–297 (NKMD) and A351 each bind GTP. A G5 motif region spans residues 349-354 (TTAIDT).

The protein belongs to the G-alpha family. G(12) subfamily. In terms of assembly, g proteins are composed of 3 units; alpha, beta and gamma. The alpha chain contains the guanine nucleotide binding site. Interacts with UBXD5. Interacts (in GTP-bound form) with PPP5C (via TPR repeats); activates PPP5C phosphatase activity and translocates PPP5C to the cell membrane. Interacts with RGS22. Interacts (via N-terminus) with NAPA; the interaction promotes CDH5 localization to plasma membrane. Interacts with CTNND1 (via N-terminus); the interaction regulates CDH1-mediated cell-cell adhesion. Interacts with PPP2R1A; the interaction promotes protein phosphatase 2A activation causing dephosphorylation of MAPT. Interacts (in GTP-bound form) with ARHGEF1. Interacts (in GTP-bound form) with ARHGEF11 (via RGS domain). Interacts (in GTP-bound form) with ARHGEF12 (via RGS domain).

The protein localises to the cell membrane. It localises to the lateral cell membrane. It is found in the cytoplasm. Its function is as follows. Guanine nucleotide-binding proteins (G proteins) are involved as modulators or transducers in various transmembrane signaling systems. Activates effector molecule RhoA by binding and activating RhoGEFs (ARHGEF12/LARG). GNA12-dependent Rho signaling subsequently regulates transcription factor AP-1 (activating protein-1). GNA12-dependent Rho signaling also regulates protein phosphatese 2A activation causing dephosphorylation of its target proteins. Promotes tumor cell invasion and metastasis by activating RhoA/ROCK signaling pathway and up-regulating pro-inflammatory cytokine production. Inhibits CDH1-mediated cell adhesion in process independent from Rho activation. Together with NAPA promotes CDH5 localization to plasma membrane. May play a role in the control of cell migration through the TOR signaling cascade. The polypeptide is Guanine nucleotide-binding protein subunit alpha-12 (Gna12) (Rattus norvegicus (Rat)).